Consider the following 266-residue polypeptide: Type III pantothenate kinase (266 aa).

An ATP-binding site is contributed by 6–13 (DIGNSRIK). Substrate contacts are provided by residues Tyr-94 and 101-104 (GIDR). Asp-103 functions as the Proton acceptor in the catalytic mechanism. Asp-128 is a K(+) binding site. Thr-131 contacts ATP. Thr-183 provides a ligand contact to substrate.

It belongs to the type III pantothenate kinase family. Homodimer. NH4(+) is required as a cofactor. The cofactor is K(+).

It localises to the cytoplasm. It catalyses the reaction (R)-pantothenate + ATP = (R)-4'-phosphopantothenate + ADP + H(+). The protein operates within cofactor biosynthesis; coenzyme A biosynthesis; CoA from (R)-pantothenate: step 1/5. Catalyzes the phosphorylation of pantothenate (Pan), the first step in CoA biosynthesis. The polypeptide is Type III pantothenate kinase (Nitrosococcus oceani (strain ATCC 19707 / BCRC 17464 / JCM 30415 / NCIMB 11848 / C-107)).